The following is a 119-amino-acid chain: Ghilanten (119 aa).

A Pyrrolidone carboxylic acid modification is found at glutamine 1. 10 cysteine pairs are disulfide-bonded: cysteine 8/cysteine 19, cysteine 13/cysteine 26, cysteine 28/cysteine 48, cysteine 33/cysteine 51, cysteine 37/cysteine 53, cysteine 62/cysteine 73, cysteine 67/cysteine 80, cysteine 82/cysteine 103, cysteine 88/cysteine 106, and cysteine 92/cysteine 108. An Antistasin-like 1 domain is found at 28-53; the sequence is CPEVRCRVYCSHGFQRSRYGCEVCRC. In terms of domain architecture, Antistasin-like 2 spans 83–108; sequence KIDINCRKTCPNGLKRDKLGCEYCEC. Heparin is bound by residues 97 to 100 and 111 to 118; these read KRDK and KRKLVPRL.

Belongs to the protease inhibitor I15 (antistasin) family.

It is found in the secreted. In terms of biological role, this highly disulfide-bonded protein is a potent inhibitor of factor Xa. May have therapeutic utility as an anticoagulant. Also exhibits a strong metastatic activity. This is Ghilanten from Haementeria ghilianii (Amazon leech).